Reading from the N-terminus, the 215-residue chain is NAD(P)H-hydrate epimerase (215 aa).

A YjeF N-terminal domain is found at 8–212 (MYNIENKGHD…KIGIPPEAEE (205 aa)). 57–61 (NNGGD) is a (6S)-NADPHX binding site. Residues Asn58 and Asp124 each contribute to the K(+) site. Residues 128–134 (GTGISGE), Tyr139, and Asp157 contribute to the (6S)-NADPHX site. Residue Ser160 participates in K(+) binding.

It belongs to the NnrE/AIBP family. It depends on K(+) as a cofactor.

The enzyme catalyses (6R)-NADHX = (6S)-NADHX. The catalysed reaction is (6R)-NADPHX = (6S)-NADPHX. Functionally, catalyzes the epimerization of the S- and R-forms of NAD(P)HX, a damaged form of NAD(P)H that is a result of enzymatic or heat-dependent hydration. This is a prerequisite for the S-specific NAD(P)H-hydrate dehydratase to allow the repair of both epimers of NAD(P)HX. This chain is NAD(P)H-hydrate epimerase, found in Nitrosopumilus maritimus (strain SCM1).